Reading from the N-terminus, the 273-residue chain is Putative pyruvate, phosphate dikinase regulatory protein (273 aa).

Position 153 to 160 (Gly153 to Thr160) interacts with ADP.

This sequence belongs to the pyruvate, phosphate/water dikinase regulatory protein family. PDRP subfamily.

It carries out the reaction N(tele)-phospho-L-histidyl/L-threonyl-[pyruvate, phosphate dikinase] + ADP = N(tele)-phospho-L-histidyl/O-phospho-L-threonyl-[pyruvate, phosphate dikinase] + AMP + H(+). The enzyme catalyses N(tele)-phospho-L-histidyl/O-phospho-L-threonyl-[pyruvate, phosphate dikinase] + phosphate + H(+) = N(tele)-phospho-L-histidyl/L-threonyl-[pyruvate, phosphate dikinase] + diphosphate. Its function is as follows. Bifunctional serine/threonine kinase and phosphorylase involved in the regulation of the pyruvate, phosphate dikinase (PPDK) by catalyzing its phosphorylation/dephosphorylation. In Agrobacterium fabrum (strain C58 / ATCC 33970) (Agrobacterium tumefaciens (strain C58)), this protein is Putative pyruvate, phosphate dikinase regulatory protein.